We begin with the raw amino-acid sequence, 330 residues long: Beta-1,6-galactofuranosyltransferase WbbI (330 aa).

It is found in the cytoplasm. The protein operates within bacterial outer membrane biogenesis; lipopolysaccharide biosynthesis. Involved in the transfer of galactofuranose (Galf) onto an alpha-D-gluco-configured acceptor substrate to form a beta-1,6-linkage. It uses n-octyl alpha-D-glucopyranoside as an acceptor substrate for the addition of galactofuranose from the donor substrate UDP-galactofuranose. It is not able to use beta-D-glucopyranoside isomers. In Escherichia coli (strain K12), this protein is Beta-1,6-galactofuranosyltransferase WbbI (wbbI).